The sequence spans 178 residues: Cytidylate kinase (178 aa).

7 to 15 (GLPGTGTTT) provides a ligand contact to ATP.

This sequence belongs to the cytidylate kinase family. Type 2 subfamily.

The protein resides in the cytoplasm. It catalyses the reaction CMP + ATP = CDP + ADP. The enzyme catalyses dCMP + ATP = dCDP + ADP. This chain is Cytidylate kinase, found in Methanococcus maripaludis (strain C5 / ATCC BAA-1333).